The chain runs to 115 residues: uncharacterized protein (115 aa).

A helical transmembrane segment spans residues 36–56; it reads SFFSLGLIACFCIFLIIVLSE.

The protein resides in the membrane. This is an uncharacterized protein from Saccharomyces cerevisiae (strain ATCC 204508 / S288c) (Baker's yeast).